The following is a 100-amino-acid chain: Aspartyl/glutamyl-tRNA(Asn/Gln) amidotransferase subunit C (100 aa).

This sequence belongs to the GatC family. As to quaternary structure, heterotrimer of A, B and C subunits.

It catalyses the reaction L-glutamyl-tRNA(Gln) + L-glutamine + ATP + H2O = L-glutaminyl-tRNA(Gln) + L-glutamate + ADP + phosphate + H(+). The catalysed reaction is L-aspartyl-tRNA(Asn) + L-glutamine + ATP + H2O = L-asparaginyl-tRNA(Asn) + L-glutamate + ADP + phosphate + 2 H(+). In terms of biological role, allows the formation of correctly charged Asn-tRNA(Asn) or Gln-tRNA(Gln) through the transamidation of misacylated Asp-tRNA(Asn) or Glu-tRNA(Gln) in organisms which lack either or both of asparaginyl-tRNA or glutaminyl-tRNA synthetases. The reaction takes place in the presence of glutamine and ATP through an activated phospho-Asp-tRNA(Asn) or phospho-Glu-tRNA(Gln). The chain is Aspartyl/glutamyl-tRNA(Asn/Gln) amidotransferase subunit C from Staphylococcus epidermidis (strain ATCC 35984 / DSM 28319 / BCRC 17069 / CCUG 31568 / BM 3577 / RP62A).